A 209-amino-acid polypeptide reads, in one-letter code: Kynurenine formamidase (209 aa).

Phe19 is a binding site for substrate. Positions 49, 53, and 55 each coordinate Zn(2+). The active-site Proton donor/acceptor is the His59. Zn(2+)-binding residues include His160 and Glu172.

It belongs to the Cyclase 1 superfamily. KynB family. Homodimer. Zn(2+) serves as cofactor.

It catalyses the reaction N-formyl-L-kynurenine + H2O = L-kynurenine + formate + H(+). Its pathway is amino-acid degradation; L-tryptophan degradation via kynurenine pathway; L-kynurenine from L-tryptophan: step 2/2. Its function is as follows. Catalyzes the hydrolysis of N-formyl-L-kynurenine to L-kynurenine, the second step in the kynurenine pathway of tryptophan degradation. The protein is Kynurenine formamidase of Delftia acidovorans (strain DSM 14801 / SPH-1).